The following is a 119-amino-acid chain: Immunoglobulin heavy variable 2-26 (119 aa).

Residues 1–19 (MDTLCYTLLLLTTPSWVLS) form the signal peptide. Residue Gln20 is modified to Pyrrolidone carboxylic acid. Residues 20 to 44 (QVTLKESGPVLVKPTETLTLTCTVS) form a framework-1 region. Positions 20–119 (QVTLKESGPV…DTATYYCARI (100 aa)) constitute an Ig-like domain. Cysteines 41 and 116 form a disulfide. The tract at residues 45–54 (GFSLSNARMG) is complementarity-determining-1. The interval 55–71 (VSWIRQPPGKALEWLAH) is framework-2. The complementarity-determining-2 stretch occupies residues 72–78 (IFSNDEK). Residues 79-116 (SYSTSLKSRLTISKDTSKSQVVLTMTNMDPVDTATYYC) are framework-3. The complementarity-determining-3 stretch occupies residues 117–119 (ARI).

Immunoglobulins are composed of two identical heavy chains and two identical light chains; disulfide-linked.

The protein resides in the secreted. It is found in the cell membrane. Functionally, v region of the variable domain of immunoglobulin heavy chains that participates in the antigen recognition. Immunoglobulins, also known as antibodies, are membrane-bound or secreted glycoproteins produced by B lymphocytes. In the recognition phase of humoral immunity, the membrane-bound immunoglobulins serve as receptors which, upon binding of a specific antigen, trigger the clonal expansion and differentiation of B lymphocytes into immunoglobulins-secreting plasma cells. Secreted immunoglobulins mediate the effector phase of humoral immunity, which results in the elimination of bound antigens. The antigen binding site is formed by the variable domain of one heavy chain, together with that of its associated light chain. Thus, each immunoglobulin has two antigen binding sites with remarkable affinity for a particular antigen. The variable domains are assembled by a process called V-(D)-J rearrangement and can then be subjected to somatic hypermutations which, after exposure to antigen and selection, allow affinity maturation for a particular antigen. The sequence is that of Immunoglobulin heavy variable 2-26 from Homo sapiens (Human).